Reading from the N-terminus, the 307-residue chain is Sporulation sigma-E factor-processing peptidase (307 aa).

The next 5 membrane-spanning stretches (helical) occupy residues 7–27, 36–56, 57–77, 89–109, and 127–147; these read LIWM…AVVL, LLLG…PFSH, LMVH…MTFG, LTFY…HFLF, and FGDP…SYFS. Asp183 is an active-site residue.

The protein belongs to the peptidase U4 family. In terms of assembly, self-associates. Interacts with SigE. Interacts with SpoIIR.

It localises to the cell membrane. Functionally, probable aspartic protease that is responsible for the proteolytic cleavage of the RNA polymerase sigma E factor (SigE/spoIIGB) to yield the active peptide in the mother cell during sporulation. Responds to a signal from the forespore that is triggered by the extracellular signal protein SpoIIR. This is Sporulation sigma-E factor-processing peptidase from Priestia megaterium (strain ATCC 12872 / QMB1551) (Bacillus megaterium).